Consider the following 490-residue polypeptide: Cytochrome P450 71B29 (490 aa).

Residues 1–21 form a helical membrane-spanning segment; that stretch reads MAIILCFLILLPLILIFLKKL. Position 440 (cysteine 440) interacts with heme.

Belongs to the cytochrome P450 family. Heme serves as cofactor.

It is found in the membrane. The polypeptide is Cytochrome P450 71B29 (CYP71B29) (Arabidopsis thaliana (Mouse-ear cress)).